The sequence spans 293 residues: Cyclohexadienyl dehydrogenase (293 aa).

Residues 5-293 (KHIAIIGLGL…ALKTDHDIRP (289 aa)) form the Prephenate/arogenate dehydrogenase domain. 6–30 (HIAIIGLGLIGSSAARATKAYCPDV) contacts NAD(+).

This sequence belongs to the prephenate/arogenate dehydrogenase family. Homodimer.

The catalysed reaction is L-arogenate + NAD(+) = L-tyrosine + CO2 + NADH. It carries out the reaction prephenate + NAD(+) = 3-(4-hydroxyphenyl)pyruvate + CO2 + NADH. Its pathway is amino-acid biosynthesis; L-tyrosine biosynthesis; (4-hydroxyphenyl)pyruvate from prephenate (NAD(+) route): step 1/1. It functions in the pathway amino-acid biosynthesis; L-tyrosine biosynthesis; L-tyrosine from L-arogenate (NAD(+) route): step 1/1. With respect to regulation, insensitive to feedback inhibition by L-tyrosine. Its function is as follows. Can function as either prephenate dehydrogenase or as arogenate dehydrogenase in the biosynthesis of L-tyrosine. Catalyzes two analogous reactions: converts prephenate to 4-hydroxyphenylpyruvate and transforms L-arogenate to L-tyrosine. Is not able to utilize NADP(+) instead of NAD(+) as cosubstrate. This is Cyclohexadienyl dehydrogenase from Zymomonas mobilis subsp. mobilis (strain ATCC 31821 / ZM4 / CP4).